Here is a 450-residue protein sequence, read N- to C-terminus: MNNKRHSTNEQLSLDEINNTIKFDHRSSNKQKFLSFLGPGLLVAVGYMDPGNWITSMQGGAQYGYTLLFVILISSLSAMLLQSMTVRLGIATGMDLAQMTRHYLSRPIAIIFWIIAELAIIATDIAEVIGSAIALNLLFNIPLIVGALITVLDVFLLLFIMKYGFRKIEAIVGTLIFTVLFIFIFEVYISSPQLNAVLNGFIPHSEIITNNGILYIALGIIGATIMPHNLYLHSSIVQSRTYSRHNNEEKSQAIKFATIDSNIQLSIAFVVNCLLLVLGASLFFNSNADDLGGFYDLYHALKTEPVLGATMGAIMSTLFAVALLASGQNSTITGTLAGQIVMEGFLRLHIPNWLRRLITRSLAVIPVIVCLSIFKGNAAKIEQLLVFSQVFLSIALPFCLIPLQLATSNKDLMGPFYNKTWVNIISWTLIIILSILNVYLIVQTFQELQG.

The next 11 helical transmembrane spans lie at 34–54 (LSFL…GNWI), 61–81 (AQYG…AMLL), 108–128 (IAII…IAEV), 141–161 (IPLI…LFIM), 170–190 (AIVG…VYIS), 212–232 (GILY…NLYL), 263–283 (IQLS…ASLF), 305–325 (PVLG…ALLA), 361–381 (SLAV…AAKI), 383–403 (QLLV…LIPL), and 422–442 (VNII…YLIV).

This sequence belongs to the NRAMP family.

The protein resides in the cell membrane. Functionally, h(+)-stimulated, divalent metal cation uptake system. This Staphylococcus aureus (strain bovine RF122 / ET3-1) protein is Divalent metal cation transporter MntH.